Here is a 500-residue protein sequence, read N- to C-terminus: L-arabinose isomerase (500 aa).

Residues E306, E333, H349, and H448 each contribute to the Mn(2+) site.

It belongs to the arabinose isomerase family. Mn(2+) is required as a cofactor.

It carries out the reaction beta-L-arabinopyranose = L-ribulose. It participates in carbohydrate degradation; L-arabinose degradation via L-ribulose; D-xylulose 5-phosphate from L-arabinose (bacterial route): step 1/3. Its function is as follows. Catalyzes the conversion of L-arabinose to L-ribulose. The sequence is that of L-arabinose isomerase from Saccharophagus degradans (strain 2-40 / ATCC 43961 / DSM 17024).